The chain runs to 136 residues: Small ribosomal subunit protein eS8 (136 aa).

The disordered stretch occupies residues 1 to 23 (MGVYHGNDLKKPTGGKKRPHQKV). Residues 13 to 23 (TGGKKRPHQKV) show a composition bias toward basic residues.

This sequence belongs to the eukaryotic ribosomal protein eS8 family. As to quaternary structure, part of the 30S ribosomal subunit.

The sequence is that of Small ribosomal subunit protein eS8 from Hyperthermus butylicus (strain DSM 5456 / JCM 9403 / PLM1-5).